We begin with the raw amino-acid sequence, 606 residues long: Flagellar WD repeat-containing protein Pf20 (606 aa).

Residues 229 to 250 (PLPGAERSLGGQSTAAAGGGAS) form a disordered region. WD repeat units follow at residues 324–354 (GHLL…KMWH), 366–396 (GHKD…KIWD), 408–438 (DHKQ…RLWD), 450–480 (GHVD…SVWD), 492–522 (GHQN…KLWD), 534–564 (TGKH…KAYS), and 576–606 (GHED…RLWS).

Inter-microtubule bridges in flagella.

It is found in the cell projection. The protein resides in the cilium. Its subcellular location is the flagellum. This is Flagellar WD repeat-containing protein Pf20 (PF20) from Chlamydomonas reinhardtii (Chlamydomonas smithii).